The primary structure comprises 263 residues: MLELRLVQGSLLKKVLEAIRELVNDANFDCSGTGFSLQAMDSSHVALVALLLRAEGFEHYRCDRNLSMGMNLNNMAKMLRCAGNDDIITIKADDGSDTVTFMFESPKQDKIADFEMKLMDIDSEHLGIPDSEYQAIVRMPSSEFMRICKDLSSIGDTVVISVTKEGVKFSTSGEIGSANIVCRQNQTIDKPEEATIIEMQEPVSLTFALRYMNSFTKASSLSEQVTISLSSELPVVVEYKIAEMGYIRFYLAPKIEDDEEMKP.

A DNA-binding region spans residues 61–80; the sequence is RCDRNLSMGMNLNNMAKMLR.

The protein belongs to the PCNA family.

Its subcellular location is the nucleus. Functionally, this protein is an auxiliary protein of DNA polymerase delta and is involved in the control of eukaryotic DNA replication by increasing the polymerase's processibility during elongation of the leading strand. The polypeptide is Proliferating cell nuclear antigen (PCNA) (Zea mays (Maize)).